Reading from the N-terminus, the 169-residue chain is Peptide deformylase 1 (169 aa).

Fe cation-binding residues include C91 and H133. E134 is an active-site residue. Residue H137 participates in Fe cation binding.

It belongs to the polypeptide deformylase family. It depends on Fe(2+) as a cofactor.

It carries out the reaction N-terminal N-formyl-L-methionyl-[peptide] + H2O = N-terminal L-methionyl-[peptide] + formate. In terms of biological role, removes the formyl group from the N-terminal Met of newly synthesized proteins. Requires at least a dipeptide for an efficient rate of reaction. N-terminal L-methionine is a prerequisite for activity but the enzyme has broad specificity at other positions. The polypeptide is Peptide deformylase 1 (Vibrio cholerae serotype O1 (strain ATCC 39315 / El Tor Inaba N16961)).